The following is a 331-amino-acid chain: Ketol-acid reductoisomerase (NADP(+)) (331 aa).

The KARI N-terminal Rossmann domain maps to 2–182 (ARMYYDQDAN…GGTRAGILET (181 aa)). Residues 25–28 (YGSQ), Ser-51, Ser-53, and 83–86 (DEVQ) contribute to the NADP(+) site. His-108 is a catalytic residue. Gly-134 is an NADP(+) binding site. The KARI C-terminal knotted domain maps to 183-328 (TFREETETDL…KDLRAMFSWL (146 aa)). Mg(2+) is bound by residues Asp-191, Glu-195, Glu-227, and Glu-231. Ser-252 is a substrate binding site.

Belongs to the ketol-acid reductoisomerase family. Homooctamer. It depends on Mg(2+) as a cofactor.

It catalyses the reaction (2R)-2,3-dihydroxy-3-methylbutanoate + NADP(+) = (2S)-2-acetolactate + NADPH + H(+). The enzyme catalyses (2R,3R)-2,3-dihydroxy-3-methylpentanoate + NADP(+) = (S)-2-ethyl-2-hydroxy-3-oxobutanoate + NADPH + H(+). It functions in the pathway amino-acid biosynthesis; L-isoleucine biosynthesis; L-isoleucine from 2-oxobutanoate: step 2/4. Its pathway is amino-acid biosynthesis; L-valine biosynthesis; L-valine from pyruvate: step 2/4. In terms of biological role, involved in the biosynthesis of branched-chain amino acids (BCAA). Catalyzes an alkyl-migration followed by a ketol-acid reduction of (S)-2-acetolactate (S2AL) to yield (R)-2,3-dihydroxy-isovalerate. In the isomerase reaction, S2AL is rearranged via a Mg-dependent methyl migration to produce 3-hydroxy-3-methyl-2-ketobutyrate (HMKB). In the reductase reaction, this 2-ketoacid undergoes a metal-dependent reduction by NADPH to yield (R)-2,3-dihydroxy-isovalerate. The polypeptide is Ketol-acid reductoisomerase (NADP(+)) (Synechocystis sp. (strain ATCC 27184 / PCC 6803 / Kazusa)).